The primary structure comprises 319 residues: Annexin A4 (319 aa).

The residue at position 2 (Ala-2) is an N-acetylalanine. Thr-7 bears the Phosphothreonine mark. Ser-12 is subject to Phosphoserine. Annexin repeat units lie at residues 14 to 85, 86 to 157, 169 to 241, and 245 to 316; these read FNAA…GMMT, PTVL…SLSA, ALMR…AIVK, and NKSA…ILCG. N6-acetyllysine is present on residues Lys-213, Lys-293, and Lys-300.

Belongs to the annexin family. Monomer. Binds to SFTPA1 in a Ca(2+)-dependent manner.

It localises to the zymogen granule membrane. Functionally, may play a role in alveolar type II cells through interaction with the surfactant protein SFTPA1 (SP-A). The protein is Annexin A4 (ANXA4) of Bos taurus (Bovine).